Reading from the N-terminus, the 199-residue chain is NADH-quinone oxidoreductase subunit B 2 (199 aa).

Cys78, Cys79, Cys143, and Cys173 together coordinate [4Fe-4S] cluster.

Belongs to the complex I 20 kDa subunit family. NDH-1 is composed of 14 different subunits. Subunits NuoB, C, D, E, F, and G constitute the peripheral sector of the complex. [4Fe-4S] cluster is required as a cofactor.

It is found in the cell inner membrane. It carries out the reaction a quinone + NADH + 5 H(+)(in) = a quinol + NAD(+) + 4 H(+)(out). Its function is as follows. NDH-1 shuttles electrons from NADH, via FMN and iron-sulfur (Fe-S) centers, to quinones in the respiratory chain. The immediate electron acceptor for the enzyme in this species is believed to be ubiquinone. Couples the redox reaction to proton translocation (for every two electrons transferred, four hydrogen ions are translocated across the cytoplasmic membrane), and thus conserves the redox energy in a proton gradient. This chain is NADH-quinone oxidoreductase subunit B 2, found in Rhodopseudomonas palustris (strain BisB5).